Here is a 354-residue protein sequence, read N- to C-terminus: GTPase Obg (354 aa).

Residues 1 to 159 (MKFVDEVKIH…RDLVLELKLL (159 aa)) enclose the Obg domain. The OBG-type G domain maps to 160–333 (ADVGIVGYPN…LLDAVGRALF (174 aa)). Residues 166 to 173 (GYPNAGKS), 191 to 195 (FTTLT), 212 to 215 (DIPG), 283 to 286 (TKID), and 314 to 316 (SAV) contribute to the GTP site. The Mg(2+) site is built by S173 and T193.

The protein belongs to the TRAFAC class OBG-HflX-like GTPase superfamily. OBG GTPase family. Monomer. Mg(2+) is required as a cofactor.

The protein resides in the cytoplasm. Functionally, an essential GTPase which binds GTP, GDP and possibly (p)ppGpp with moderate affinity, with high nucleotide exchange rates and a fairly low GTP hydrolysis rate. Plays a role in control of the cell cycle, stress response, ribosome biogenesis and in those bacteria that undergo differentiation, in morphogenesis control. In Anaeromyxobacter sp. (strain K), this protein is GTPase Obg.